The primary structure comprises 170 residues: MAKHQVNYTANGGLPIVLTTVDRLVQWGRSNSLWALSYGLACCAIEMMASGASRYDFDRFGTIFRASPRHSEVMIIAGTLTKKHAEFTRRLYDQMPEPKWVISMGSCANTGGMFNTYSTVQGVDRIIPVDIYLPGCAPRPETLQYALMILQKKIRRQSAFRAQGVKRLEA.

Positions 42, 43, 107, and 136 each coordinate [4Fe-4S] cluster.

Belongs to the complex I 20 kDa subunit family. NDH-1 is composed of 14 different subunits. Subunits NuoB, C, D, E, F, and G constitute the peripheral sector of the complex. It depends on [4Fe-4S] cluster as a cofactor.

The protein localises to the cell inner membrane. It catalyses the reaction a quinone + NADH + 5 H(+)(in) = a quinol + NAD(+) + 4 H(+)(out). NDH-1 shuttles electrons from NADH, via FMN and iron-sulfur (Fe-S) centers, to quinones in the respiratory chain. The immediate electron acceptor for the enzyme in this species is believed to be ubiquinone. Couples the redox reaction to proton translocation (for every two electrons transferred, four hydrogen ions are translocated across the cytoplasmic membrane), and thus conserves the redox energy in a proton gradient. This Campylobacter curvus (strain 525.92) protein is NADH-quinone oxidoreductase subunit B.